Here is a 186-residue protein sequence, read N- to C-terminus: Holliday junction branch migration complex subunit RuvA (186 aa).

The interval 1 to 63 (MNDYINGLLH…DNVFKYYGFK (63 aa)) is domain I. A domain II region spans residues 64–137 (NQLIRDLFEL…QKELFNNKIS (74 aa)). Ser-137 is a region of interest (flexible linker). Positions 137–186 (SDKKNKVITSLEKLGYKTKDIYKIIINIDEDMNIEDLTKYVLEQLSYLHN) are domain III.

This sequence belongs to the RuvA family. In terms of assembly, homotetramer. Forms an RuvA(8)-RuvB(12)-Holliday junction (HJ) complex. HJ DNA is sandwiched between 2 RuvA tetramers; dsDNA enters through RuvA and exits via RuvB. An RuvB hexamer assembles on each DNA strand where it exits the tetramer. Each RuvB hexamer is contacted by two RuvA subunits (via domain III) on 2 adjacent RuvB subunits; this complex drives branch migration. In the full resolvosome a probable DNA-RuvA(4)-RuvB(12)-RuvC(2) complex forms which resolves the HJ.

Its subcellular location is the cytoplasm. In terms of biological role, the RuvA-RuvB-RuvC complex processes Holliday junction (HJ) DNA during genetic recombination and DNA repair, while the RuvA-RuvB complex plays an important role in the rescue of blocked DNA replication forks via replication fork reversal (RFR). RuvA specifically binds to HJ cruciform DNA, conferring on it an open structure. The RuvB hexamer acts as an ATP-dependent pump, pulling dsDNA into and through the RuvAB complex. HJ branch migration allows RuvC to scan DNA until it finds its consensus sequence, where it cleaves and resolves the cruciform DNA. The protein is Holliday junction branch migration complex subunit RuvA of Mycoplasma mycoides subsp. mycoides SC (strain CCUG 32753 / NCTC 10114 / PG1).